The chain runs to 277 residues: Proteasome subunit beta type-7 (277 aa).

The propeptide at Met1–Gly43 is removed in mature form. The active-site Nucleophile is the Thr44.

This sequence belongs to the peptidase T1B family. As to quaternary structure, the 26S proteasome consists of a 20S proteasome core and two 19S regulatory subunits. The 20S proteasome core is a barrel-shaped complex made of 28 subunits that are arranged in four stacked rings. The two outer rings are each formed by seven alpha subunits, and the two inner rings are formed by seven beta subunits. The proteolytic activity is exerted by three beta-subunits PSMB5, PSMB6 and PSMB7.

It localises to the cytoplasm. The protein resides in the nucleus. It carries out the reaction Cleavage of peptide bonds with very broad specificity.. Its function is as follows. Component of the 20S core proteasome complex involved in the proteolytic degradation of most intracellular proteins. This complex plays numerous essential roles within the cell by associating with different regulatory particles. Associated with two 19S regulatory particles, forms the 26S proteasome and thus participates in the ATP-dependent degradation of ubiquitinated proteins. The 26S proteasome plays a key role in the maintenance of protein homeostasis by removing misfolded or damaged proteins that could impair cellular functions, and by removing proteins whose functions are no longer required. Associated with the PA200 or PA28, the 20S proteasome mediates ubiquitin-independent protein degradation. This type of proteolysis is required in several pathways including spermatogenesis (20S-PA200 complex) or generation of a subset of MHC class I-presented antigenic peptides (20S-PA28 complex). Within the 20S core complex, PSMB7 displays a trypsin-like activity. In Mus musculus (Mouse), this protein is Proteasome subunit beta type-7 (Psmb7).